The chain runs to 244 residues: Large ribosomal subunit protein uL2 (244 aa).

2 stretches are compositionally biased toward basic residues: residues 1-12 and 234-244; these read MGKRPLVRRRGR and KTGRARIKERK. Disordered regions lie at residues 1–30 and 203–244; these read MGKR…TKAN and HGGG…KERK.

The protein belongs to the universal ribosomal protein uL2 family. As to quaternary structure, part of the 50S ribosomal subunit. Forms a bridge to the 30S subunit in the 70S ribosome.

Its function is as follows. One of the primary rRNA binding proteins. Required for association of the 30S and 50S subunits to form the 70S ribosome, for tRNA binding and peptide bond formation. It has been suggested to have peptidyltransferase activity; this is somewhat controversial. Makes several contacts with the 16S rRNA in the 70S ribosome. In Nitrosopumilus maritimus (strain SCM1), this protein is Large ribosomal subunit protein uL2.